The following is a 376-amino-acid chain: Chaperone protein DnaJ (376 aa).

Positions 5–70 (DYYEILGVSK…QKRAAYDQYG (66 aa)) constitute a J domain. The CR-type zinc-finger motif lies at 131–209 (GVTKEIRIPT…CHGHGRVERS (79 aa)). Cysteine 144, cysteine 147, cysteine 161, cysteine 164, cysteine 183, cysteine 186, cysteine 197, and cysteine 200 together coordinate Zn(2+). 4 CXXCXGXG motif repeats span residues 144 to 151 (CDVCHGSG), 161 to 168 (CPTCHGSG), 183 to 190 (CPHCQGRG), and 197 to 204 (CNKCHGHG).

This sequence belongs to the DnaJ family. Homodimer. Zn(2+) serves as cofactor.

The protein resides in the cytoplasm. In terms of biological role, participates actively in the response to hyperosmotic and heat shock by preventing the aggregation of stress-denatured proteins and by disaggregating proteins, also in an autonomous, DnaK-independent fashion. Unfolded proteins bind initially to DnaJ; upon interaction with the DnaJ-bound protein, DnaK hydrolyzes its bound ATP, resulting in the formation of a stable complex. GrpE releases ADP from DnaK; ATP binding to DnaK triggers the release of the substrate protein, thus completing the reaction cycle. Several rounds of ATP-dependent interactions between DnaJ, DnaK and GrpE are required for fully efficient folding. Also involved, together with DnaK and GrpE, in the DNA replication of plasmids through activation of initiation proteins. The sequence is that of Chaperone protein DnaJ from Escherichia coli (strain K12 / DH10B).